Here is a 105-residue protein sequence, read N- to C-terminus: Large ribosomal subunit protein uL24 (105 aa).

It belongs to the universal ribosomal protein uL24 family. Part of the 50S ribosomal subunit.

In terms of biological role, one of two assembly initiator proteins, it binds directly to the 5'-end of the 23S rRNA, where it nucleates assembly of the 50S subunit. Its function is as follows. One of the proteins that surrounds the polypeptide exit tunnel on the outside of the subunit. The protein is Large ribosomal subunit protein uL24 of Xanthomonas oryzae pv. oryzae (strain PXO99A).